We begin with the raw amino-acid sequence, 281 residues long: AB hydrolase superfamily protein YclE (281 aa).

In terms of domain architecture, AB hydrolase-1 spans 30 to 268; sequence SAVYYPRLFS…SGHQPMLEEP (239 aa). Residue Ser-95 is the Nucleophile of the active site. Asp-232 is a catalytic residue. His-261 functions as the Proton donor in the catalytic mechanism.

This sequence belongs to the AB hydrolase superfamily.

In Bacillus subtilis (strain 168), this protein is AB hydrolase superfamily protein YclE (yclE).